Consider the following 224-residue polypeptide: Ribose-5-phosphate isomerase A (224 aa).

Substrate is bound by residues 34 to 37 (TGST), 87 to 90 (DGAD), and 100 to 103 (KGGG). The active-site Proton acceptor is Glu-109. A substrate-binding site is contributed by Lys-127.

This sequence belongs to the ribose 5-phosphate isomerase family. As to quaternary structure, homodimer.

The enzyme catalyses aldehydo-D-ribose 5-phosphate = D-ribulose 5-phosphate. It functions in the pathway carbohydrate degradation; pentose phosphate pathway; D-ribose 5-phosphate from D-ribulose 5-phosphate (non-oxidative stage): step 1/1. Its function is as follows. Catalyzes the reversible conversion of ribose-5-phosphate to ribulose 5-phosphate. This is Ribose-5-phosphate isomerase A from Francisella tularensis subsp. tularensis (strain FSC 198).